A 462-amino-acid polypeptide reads, in one-letter code: Fumarate hydratase class II (462 aa).

Substrate is bound by residues 97–99 (SGT), 127–130 (HPND), 137–139 (SSN), and threonine 185. The active-site Proton donor/acceptor is histidine 186. Residue serine 316 is part of the active site. Substrate-binding positions include serine 317 and 322 to 324 (KVN).

It belongs to the class-II fumarase/aspartase family. Fumarase subfamily. As to quaternary structure, homotetramer.

The protein resides in the cytoplasm. It carries out the reaction (S)-malate = fumarate + H2O. The protein operates within carbohydrate metabolism; tricarboxylic acid cycle; (S)-malate from fumarate: step 1/1. Involved in the TCA cycle. Catalyzes the stereospecific interconversion of fumarate to L-malate. In Bacillus anthracis, this protein is Fumarate hydratase class II.